Consider the following 511-residue polypeptide: DNA nucleotidylexotransferase (511 aa).

The tract at residues 1-26 is disordered; it reads MDPLQTAHAGPRKKRPRQTGASMAST. Residues 11–17 carry the Nuclear localization signal motif; that stretch reads PRKKRPR. A BRCT domain is found at 27–124; that stretch reads PQDVRFQDLV…KPVETTGKHQ (98 aa). Ser134 carries the post-translational modification Phosphoserine. The segment at 151 to 511 is mediates interaction with DNTTIP2; the sequence is SQYACQRRTT…DYIEPSERNA (361 aa). An involved in DNA binding region spans residues 258–262; that stretch reads VGLKT. A 2'-deoxyribonucleoside 5'-triphosphate is bound by residues 333–338 and 342–345; these read GFRRGK and HDVD. Asp343, Asp345, and Asp435 together coordinate Mg(2+). 450–451 is an a 2'-deoxyribonucleoside 5'-triphosphate binding site; sequence GW.

Belongs to the DNA polymerase type-X family. As to quaternary structure, interacts with PRP19 and DNTTIP1. Forms a ternary complex with DNTTIP2 and core histone. Released from this complex by PCNA. Interacts with TRERF1. It depends on Mg(2+) as a cofactor.

The protein localises to the nucleus. It carries out the reaction DNA(n) + a 2'-deoxyribonucleoside 5'-triphosphate = DNA(n+1) + diphosphate. Functionally, template-independent DNA polymerase which catalyzes the random addition of deoxynucleoside 5'-triphosphate to the 3'-end of a DNA initiator. One of the in vivo functions of this enzyme is the addition of nucleotides at the junction (N region) of rearranged Ig heavy chain and T-cell receptor gene segments during the maturation of B- and T-cells. This chain is DNA nucleotidylexotransferase (DNTT), found in Eulemur macaco (Black lemur).